The sequence spans 343 residues: Multidrug resistance protein MdtN (343 aa).

Over 1-12 (MESTPKKAPRSK) the chain is Cytoplasmic. Residues 13–33 (FPALLVVALALVALVFVIWRV) form a helical; Signal-anchor for type II membrane protein membrane-spanning segment. Topologically, residues 34–343 (DSAPSTNDAY…ASAVANLEPQ (310 aa)) are periplasmic.

The protein belongs to the membrane fusion protein (MFP) (TC 8.A.1) family. As to quaternary structure, could be part of a tripartite efflux system composed of MdtN, MdtO and MdtP.

Its subcellular location is the cell inner membrane. Functionally, could be involved in resistance to puromycin, acriflavine and tetraphenylarsonium chloride. The protein is Multidrug resistance protein MdtN (mdtN) of Shigella flexneri.